Consider the following 246-residue polypeptide: MAGHSKWANIKHRKAAQDAQRGKIFTKLIRELVTAAKIGGGDVSANPRLRSAVDKALSNNMTRDTINRAIERGVGGGDDTNMETKIYEGYGPGGTAVMVECLSDNANRTISQVRPSFTKCGGNLGTEGSVGYLFSKKGLILIASGDEDALTEAAIEAGADDIQPQEDGSFEVYTAWEDLGSVRDGIEAAGFKIQEAEVTMIPSTTVELDAETAPKLLDLINRLEDCDDVQNVYHNGEISDEVAALL.

This sequence belongs to the TACO1 family.

It is found in the cytoplasm. This is Probable transcriptional regulatory protein APJL_1171 from Actinobacillus pleuropneumoniae serotype 3 (strain JL03).